A 180-amino-acid polypeptide reads, in one-letter code: Translation initiation factor IF-3 (180 aa).

This sequence belongs to the IF-3 family. As to quaternary structure, monomer.

It localises to the cytoplasm. In terms of biological role, IF-3 binds to the 30S ribosomal subunit and shifts the equilibrium between 70S ribosomes and their 50S and 30S subunits in favor of the free subunits, thus enhancing the availability of 30S subunits on which protein synthesis initiation begins. This is Translation initiation factor IF-3 from Escherichia coli (strain K12 / MC4100 / BW2952).